The sequence spans 524 residues: Lycopene epsilon cyclase, chloroplastic (524 aa).

The transit peptide at 1-45 (MECVGARNFAAMAVSTFPSWSCRRKFPVVKRYSYRNIRFGLCSVR) directs the protein to the chloroplast. 111–139 (LVVIGCGPAGLALAAESAKLGLKVGLIGP) serves as a coordination point for NAD(+). The next 2 helical transmembrane spans lie at 441-461 (FFLFGLALIVQFDTEGIRSFF) and 475-495 (FLGSTLTSGDLVLFALYMFVI).

Belongs to the lycopene cyclase family.

It localises to the plastid. It is found in the chloroplast membrane. The enzyme catalyses a carotenoid psi-end group = a carotenoid epsilon-end group. It functions in the pathway carotenoid biosynthesis; alpha-zeacarotene biosynthesis. The protein operates within carotenoid biosynthesis; delta-carotene biosynthesis. In terms of biological role, involved in carotenoid biosynthesis. Catalyzes the single epsilon-cyclization reaction which converts lycopene to delta-carotene and neurosporene to alpha-zeacarotene. Required for lutein biosynthesis. The chain is Lycopene epsilon cyclase, chloroplastic from Arabidopsis thaliana (Mouse-ear cress).